The chain runs to 756 residues: Polyribonucleotide nucleotidyltransferase (756 aa).

Mg(2+) is bound by residues Asp-532 and Asp-538. The KH domain maps to 598-657 (PRVTAIKVPVDKIGEVIGPKGKMINSITEQTGANISIEDDGTVFVGATDGPSAQAAIDMI). Residues 669–738 (GERFLGTVVK…ARGKISLIPV (70 aa)) form the S1 motif domain.

It belongs to the polyribonucleotide nucleotidyltransferase family. The cofactor is Mg(2+).

Its subcellular location is the cytoplasm. The catalysed reaction is RNA(n+1) + phosphate = RNA(n) + a ribonucleoside 5'-diphosphate. Its function is as follows. Involved in mRNA degradation. Catalyzes the phosphorolysis of single-stranded polyribonucleotides processively in the 3'- to 5'-direction. In Rhodococcus erythropolis (strain PR4 / NBRC 100887), this protein is Polyribonucleotide nucleotidyltransferase.